The chain runs to 55 residues: Large ribosomal subunit protein bL33 (55 aa).

The protein belongs to the bacterial ribosomal protein bL33 family.

In Campylobacter fetus subsp. fetus (strain 82-40), this protein is Large ribosomal subunit protein bL33.